The sequence spans 353 residues: Quinolinate synthase (353 aa).

Iminosuccinate contacts are provided by histidine 47 and serine 68. A [4Fe-4S] cluster-binding site is contributed by cysteine 113. Iminosuccinate-binding positions include 139–141 (YAN) and serine 156. Cysteine 200 serves as a coordination point for [4Fe-4S] cluster. Iminosuccinate is bound by residues 226–228 (HPE) and threonine 243. Cysteine 297 is a [4Fe-4S] cluster binding site.

It belongs to the quinolinate synthase family. Type 1 subfamily. The cofactor is [4Fe-4S] cluster.

Its subcellular location is the cytoplasm. The enzyme catalyses iminosuccinate + dihydroxyacetone phosphate = quinolinate + phosphate + 2 H2O + H(+). The protein operates within cofactor biosynthesis; NAD(+) biosynthesis; quinolinate from iminoaspartate: step 1/1. In terms of biological role, catalyzes the condensation of iminoaspartate with dihydroxyacetone phosphate to form quinolinate. The sequence is that of Quinolinate synthase from Erwinia tasmaniensis (strain DSM 17950 / CFBP 7177 / CIP 109463 / NCPPB 4357 / Et1/99).